The sequence spans 209 residues: Dual specificity phosphatase 29 (209 aa).

Residues 45–193 form the Tyrosine-protein phosphatase domain; it reads HVNEVWPNLY…LRELDIKLAL (149 aa). A substrate-binding site is contributed by 137-144; it reads NCAMGRSR. Cys138 acts as the Phosphocysteine intermediate in catalysis.

This sequence belongs to the protein-tyrosine phosphatase family. Non-receptor class dual specificity subfamily.

It localises to the cytoplasm. Its subcellular location is the nucleus. The enzyme catalyses O-phospho-L-tyrosyl-[protein] + H2O = L-tyrosyl-[protein] + phosphate. It carries out the reaction O-phospho-L-seryl-[protein] + H2O = L-seryl-[protein] + phosphate. It catalyses the reaction O-phospho-L-threonyl-[protein] + H2O = L-threonyl-[protein] + phosphate. Functionally, dual specificity phosphatase able to dephosphorylate phosphotyrosine, phosphoserine and phosphothreonine residues, with a preference for phosphotyrosine as a substrate. In terms of biological role, dual specificity phosphatase able to dephosphorylate phosphotyrosine, phosphoserine and phosphothreonine residues within the same substrate, with a preference for phosphotyrosine as a substrate. Involved in the modulation of AMPK and MAPK1/2 signaling pathway. The chain is Dual specificity phosphatase 29 (dusp29) from Xenopus laevis (African clawed frog).